We begin with the raw amino-acid sequence, 251 residues long: Probable transcriptional regulatory protein AAur_2300 (251 aa).

This sequence belongs to the TACO1 family.

It localises to the cytoplasm. The sequence is that of Probable transcriptional regulatory protein AAur_2300 from Paenarthrobacter aurescens (strain TC1).